A 240-amino-acid polypeptide reads, in one-letter code: tRNA (guanine-N(1)-)-methyltransferase (240 aa).

S-adenosyl-L-methionine-binding positions include G110 and 130 to 135 (IGDYVL).

Belongs to the RNA methyltransferase TrmD family. Homodimer.

It is found in the cytoplasm. The enzyme catalyses guanosine(37) in tRNA + S-adenosyl-L-methionine = N(1)-methylguanosine(37) in tRNA + S-adenosyl-L-homocysteine + H(+). Functionally, specifically methylates guanosine-37 in various tRNAs. This is tRNA (guanine-N(1)-)-methyltransferase from Macrococcus caseolyticus (strain JCSC5402) (Macrococcoides caseolyticum).